The sequence spans 552 residues: Steroid transmembrane transporter SLC22A24 (552 aa).

12 consecutive transmembrane segments (helical) span residues 16 to 36 (FQIL…PHML), 144 to 164 (LISV…LIFG), 178 to 198 (CCLL…TFPV), 204 to 224 (FLGG…MSEW), 235 to 255 (GIIL…GFVI), 267 to 287 (IPLF…QWLI), 350 to 370 (IFYL…LMLN), 378 to 398 (IFLF…AVLL), 407 to 427 (ISQM…IFLS), 435 to 455 (VALA…HTVH), 469 to 489 (IGLN…LMIL), and 496 to 516 (LPWI…LLLP). The disordered stretch occupies residues 524–552 (PNTIQDVENNRRDSRKTKQEDISMKVTQF). A compositionally biased stretch (basic and acidic residues) spans 531–546 (ENNRRDSRKTKQEDIS).

The protein belongs to the major facilitator (TC 2.A.1) superfamily. Organic cation transporter (TC 2.A.1.19) family.

It localises to the cell membrane. The catalysed reaction is estrone 3-sulfate(out) + glutarate(in) = estrone 3-sulfate(in) + glutarate(out). It carries out the reaction 17beta-estradiol 17-O-(beta-D-glucuronate)(out) + glutarate(in) = 17beta-estradiol 17-O-(beta-D-glucuronate)(in) + glutarate(out). The enzyme catalyses taurocholate(out) + glutarate(in) = taurocholate(in) + glutarate(out). It catalyses the reaction glycocholate(out) + glutarate(in) = glycocholate(in) + glutarate(out). The catalysed reaction is dehydroepiandrosterone 3-sulfate(out) + glutarate(in) = dehydroepiandrosterone 3-sulfate(in) + glutarate(out). It carries out the reaction glutarate(in) + succinate(out) = glutarate(out) + succinate(in). Its function is as follows. Renal transmembrane organic anion/dicarboxylate exchanger that participates in the reabsorption of conjugated steroids, as well as bile acids, driven by an outward gradient of dicarboxylates such as glutarate or succinate. Transports taurocholate, estrone 3-sulfate, and estradiol-17-glucuronide (17beta-estradiol 17-O-(beta-D-glucuronate)), but not androstanediol glucuronide (5alpha-androstane-3alpha,17beta-diol 3-O-(beta-D-glucuronate)). This is Steroid transmembrane transporter SLC22A24 from Equus caballus (Horse).